The following is a 224-amino-acid chain: MLIHEISENEKPREKLQNYGIEALSSSELVALIIETGTKNESVLTIANRIIMKFKNVGEMQYASIEEFQLVNGIGIAKASKIMAAIELGRRIGIVTEQEEVVVRCPEDAVKLVMPELAFLFQEHFHCLFLNTKNQVIYRQTIFVGGLNASIVHPREVFRLALRKSAASIMCFHNHPSGDPTPSSEDLLVTKRLAEAGNIVGITLLDHIIIGKNKYISLKEKGYF.

An MPN domain is found at 102–224 (VVRCPEDAVK…YISLKEKGYF (123 aa)). Positions 173, 175, and 186 each coordinate Zn(2+). The JAMM motif signature appears at 173–186 (HNHPSGDPTPSSED).

Belongs to the UPF0758 family.

This Listeria monocytogenes serotype 4b (strain CLIP80459) protein is UPF0758 protein Lm4b_01560.